The chain runs to 297 residues: MMVNDIEYIRQAEATRVQVLSEALPYIQQFAGRTVVVKYGGAAMKDSHLKDQVIRDIVFLSCVGLRPILVHGGGPEINSWLDKLGIEAQFKNGLRVTDAPTMDVVEMVLVGRVNKEIVSLINQAGGLAVGLCGKDGNLITARPQGQEGIGFVGEVSNVNIKILETLASNGYIPVVSSVAADDSGQAYNINADTVAGEIAAALGAEKLILLTDTRGILKDYKDPGTLIPKVDIREARELINGGVVSGGMIPKVTCCVRSLAQGVRAAHIIDGRIPHALLLEIFTDVGIGTMILGSQYS.

Substrate is bound by residues 73–74 (GG), Arg95, and Asn188.

Belongs to the acetylglutamate kinase family. ArgB subfamily.

The protein localises to the cytoplasm. The enzyme catalyses N-acetyl-L-glutamate + ATP = N-acetyl-L-glutamyl 5-phosphate + ADP. The protein operates within amino-acid biosynthesis; L-arginine biosynthesis; N(2)-acetyl-L-ornithine from L-glutamate: step 2/4. Catalyzes the ATP-dependent phosphorylation of N-acetyl-L-glutamate. The protein is Acetylglutamate kinase of Trichormus variabilis (strain ATCC 29413 / PCC 7937) (Anabaena variabilis).